The following is a 665-amino-acid chain: non-specific serine/threonine protein kinase (665 aa).

In terms of domain architecture, Protein kinase spans 145–597 (FDVHCRIGSG…AEEALKHPFF (453 aa)). ATP-binding positions include 151–159 (IGSGTFSTV) and lysine 181. Aspartate 268 functions as the Proton acceptor in the catalytic mechanism.

The protein belongs to the protein kinase superfamily. Ser/Thr protein kinase family. In terms of assembly, interacts with chif (via N-terminus).

The enzyme catalyses L-seryl-[protein] + ATP = O-phospho-L-seryl-[protein] + ADP + H(+). The catalysed reaction is L-threonyl-[protein] + ATP = O-phospho-L-threonyl-[protein] + ADP + H(+). In terms of biological role, probable serine/threonine protein kinase that forms a complex with the N-terminal peptide of the chiffon protein and may be involved in regulating meiotic processes in the male testis. The sequence is that of non-specific serine/threonine protein kinase from Drosophila melanogaster (Fruit fly).